The sequence spans 544 residues: Apolipoprotein N-acyltransferase 1 (544 aa).

A run of 6 helical transmembrane segments spans residues 30 to 50 (LNLNGFPFFAYIALIPFFLLL), 57 to 79 (FSFLWGAFSGALSYFIFNFWIIF), 91 to 111 (KYCILYSVLFFVLKIIDSYFS), 115 to 135 (FIFQTIAWVAFEYLNTLGFLG), 157 to 177 (IFGVWGISFLLVFFSACSASF), and 197 to 217 (PMMIWVGTFFAFILYGAFTKI). The CN hydrolase domain maps to 225 to 501 (ARIALVQPNR…KDILVADVTV (277 aa)). Glutamate 272 (proton acceptor) is an active-site residue. Residue lysine 360 is part of the active site. Cysteine 412 acts as the Nucleophile in catalysis. Residues 514–534 (GDFFGVLCTIVLILNLCFIII) traverse the membrane as a helical segment.

This sequence belongs to the CN hydrolase family. Apolipoprotein N-acyltransferase subfamily.

Its subcellular location is the cell inner membrane. The catalysed reaction is N-terminal S-1,2-diacyl-sn-glyceryl-L-cysteinyl-[lipoprotein] + a glycerophospholipid = N-acyl-S-1,2-diacyl-sn-glyceryl-L-cysteinyl-[lipoprotein] + a 2-acyl-sn-glycero-3-phospholipid + H(+). Its pathway is protein modification; lipoprotein biosynthesis (N-acyl transfer). Functionally, catalyzes the phospholipid dependent N-acylation of the N-terminal cysteine of apolipoprotein, the last step in lipoprotein maturation. This is Apolipoprotein N-acyltransferase 1 from Treponema denticola (strain ATCC 35405 / DSM 14222 / CIP 103919 / JCM 8153 / KCTC 15104).